We begin with the raw amino-acid sequence, 163 residues long: Cyclic pyranopterin monophosphate synthase (163 aa).

Substrate contacts are provided by residues 75–77 (LCH) and 113–114 (ME). The active site involves D128.

Belongs to the MoaC family. As to quaternary structure, homohexamer; trimer of dimers.

The catalysed reaction is (8S)-3',8-cyclo-7,8-dihydroguanosine 5'-triphosphate = cyclic pyranopterin phosphate + diphosphate. Its pathway is cofactor biosynthesis; molybdopterin biosynthesis. In terms of biological role, catalyzes the conversion of (8S)-3',8-cyclo-7,8-dihydroguanosine 5'-triphosphate to cyclic pyranopterin monophosphate (cPMP). This chain is Cyclic pyranopterin monophosphate synthase, found in Jannaschia sp. (strain CCS1).